The primary structure comprises 475 residues: MKINWKLLITVTLLAFSVWALWPSLKFALMSDEKKEQSEKERDPVLGRTLKLGLDLKGGTYLLLETDTSHLNGAVKVKDAVSRAIEIIRNRIDQFGVTEPMIAKQGDKWIVIQLPGIKDPKAAKDLIGKTALLEFRIVNTSEEARQVLDLIYEKRITPVQYRENSSAYPDIKAVMPEGASVFESRSNMDYYVLDKALLTGAALANAKVEFGGEYGQMMVSIEFNRDGGKIFEYITERNIGKSLAIVLDGIVQSAPVIRTRISRGERASIEGNFNSEDAKVLAAVLRAGALPVPVRLIEERTVGPSLGDDSIKKGFMSSLIGIVLVFLFMFIYYRSSGLIADVALSLNLIILMAIMAYLKFTLTLPGVAGIALTLAMSVDANVLILERIREEIAVGKTAKMAVDAGYQKVFWTIFDANFTTLIAALFLFQFGAGPIKGFAVTLSIGLIVSMFTAVTVTKLIYEFLFKKNLLLKIKI.

A run of 6 helical transmembrane segments spans residues 7–27 (LLIT…SLKF), 313–333 (KGFM…FIYY), 338–358 (LIAD…MAYL), 364–384 (LPGV…NVLI), 410–430 (FWTI…LFQF), and 437–457 (GFAV…VTVT).

The protein belongs to the SecD/SecF family. SecD subfamily. Forms a complex with SecF. Part of the essential Sec protein translocation apparatus which comprises SecA, SecYEG and auxiliary proteins SecDF. Other proteins may also be involved.

It is found in the cell inner membrane. Its function is as follows. Part of the Sec protein translocase complex. Interacts with the SecYEG preprotein conducting channel. SecDF uses the proton motive force (PMF) to complete protein translocation after the ATP-dependent function of SecA. This is Protein translocase subunit SecD from Endomicrobium trichonymphae.